The following is a 225-amino-acid chain: uncharacterized protein (225 aa).

The interval Met1 to Val48 is disordered. Residues Pro20–Asp29 are compositionally biased toward basic and acidic residues. Residues Gly64–His136 form the HTH merR-type domain. Residues Asp201–Gly225 are disordered. The segment covering Arg216 to Gly225 has biased composition (basic residues).

This is an uncharacterized protein from Mycobacterium tuberculosis (strain CDC 1551 / Oshkosh).